The following is a 1160-amino-acid chain: Protein translocase subunit SecA (1160 aa).

Residues Gln-162 and 180–184 (GEGKT) contribute to the ATP site. Residues 342 to 362 (LLEEKEEAEEEGDSRRAQELE) are disordered. A compositionally biased stretch (acidic residues) spans 344 to 353 (EEKEEAEEEG). Asp-726 serves as a coordination point for ATP. A disordered region spans residues 1060-1134 (EVQTEGQGPR…RNEYVTVRNN (75 aa)). Residues 1074 to 1083 (QRNAQTQHDS) show a composition bias toward polar residues. Residues 1104–1115 (AAERDPTVEEKQ) show a composition bias toward basic and acidic residues.

It belongs to the SecA family. Monomer and homodimer. Part of the essential Sec protein translocation apparatus which comprises SecA, SecYEG and auxiliary proteins SecDF. Other proteins may also be involved.

Its subcellular location is the cell inner membrane. It is found in the cytoplasm. The catalysed reaction is ATP + H2O + cellular proteinSide 1 = ADP + phosphate + cellular proteinSide 2.. Its function is as follows. Part of the Sec protein translocase complex. Interacts with the SecYEG preprotein conducting channel. Has a central role in coupling the hydrolysis of ATP to the transfer of proteins into and across the cell membrane, serving as an ATP-driven molecular motor driving the stepwise translocation of polypeptide chains across the membrane. The sequence is that of Protein translocase subunit SecA from Salinibacter ruber (strain DSM 13855 / M31).